Reading from the N-terminus, the 584-residue chain is Probable terpene synthase 9 (584 aa).

3 residues coordinate Mg(2+): Asp339, Asp343, and Glu491. Positions 339–343 (DDMYD) match the DDXXD motif motif.

Belongs to the terpene synthase family. It depends on Mg(2+) as a cofactor.

Probable sesquiterpene synthase. The chain is Probable terpene synthase 9 (TPS9) from Ricinus communis (Castor bean).